The following is a 245-amino-acid chain: Orotidine 5'-phosphate decarboxylase (245 aa).

Residues aspartate 22, lysine 44, 71–80, threonine 131, arginine 192, glutamine 201, glycine 221, and arginine 222 contribute to the substrate site; that span reads DLKFHDIPNT. The active-site Proton donor is lysine 73.

Belongs to the OMP decarboxylase family. Type 1 subfamily. Homodimer.

It carries out the reaction orotidine 5'-phosphate + H(+) = UMP + CO2. It functions in the pathway pyrimidine metabolism; UMP biosynthesis via de novo pathway; UMP from orotate: step 2/2. In terms of biological role, catalyzes the decarboxylation of orotidine 5'-monophosphate (OMP) to uridine 5'-monophosphate (UMP). The protein is Orotidine 5'-phosphate decarboxylase of Escherichia fergusonii (strain ATCC 35469 / DSM 13698 / CCUG 18766 / IAM 14443 / JCM 21226 / LMG 7866 / NBRC 102419 / NCTC 12128 / CDC 0568-73).